The primary structure comprises 188 residues: Large ribosomal subunit protein bL9 (188 aa).

Over residues 149 to 170 the composition is skewed to basic and acidic residues; sequence RSEEEAERQARGEEIGVEKEEP. Residues 149 to 188 are disordered; the sequence is RSEEEAERQARGEEIGVEKEEPSGFVEEALEETVEAPAEA.

This sequence belongs to the bacterial ribosomal protein bL9 family.

In terms of biological role, binds to the 23S rRNA. This chain is Large ribosomal subunit protein bL9, found in Gluconacetobacter diazotrophicus (strain ATCC 49037 / DSM 5601 / CCUG 37298 / CIP 103539 / LMG 7603 / PAl5).